The following is a 252-amino-acid chain: Triosephosphate isomerase (252 aa).

10-12 is a binding site for substrate; the sequence is NWK. His-96 acts as the Electrophile in catalysis. The active-site Proton acceptor is the Glu-168. Substrate is bound by residues Gly-174, Ser-214, and 235-236; that span reads GG.

It belongs to the triosephosphate isomerase family. Homodimer.

The protein localises to the cytoplasm. The catalysed reaction is D-glyceraldehyde 3-phosphate = dihydroxyacetone phosphate. Its pathway is carbohydrate biosynthesis; gluconeogenesis. The protein operates within carbohydrate degradation; glycolysis; D-glyceraldehyde 3-phosphate from glycerone phosphate: step 1/1. In terms of biological role, involved in the gluconeogenesis. Catalyzes stereospecifically the conversion of dihydroxyacetone phosphate (DHAP) to D-glyceraldehyde-3-phosphate (G3P). This is Triosephosphate isomerase from Streptococcus pyogenes serotype M2 (strain MGAS10270).